Consider the following 379-residue polypeptide: tRNA-specific 2-thiouridylase MnmA (379 aa).

ATP is bound by residues 23-30 (AMSGGVDS) and leucine 49. Cysteine 117 functions as the Nucleophile in the catalytic mechanism. A disulfide bridge connects residues cysteine 117 and cysteine 214. An ATP-binding site is contributed by glycine 141. The interval 163-165 (RDQ) is interaction with tRNA. Cysteine 214 (cysteine persulfide intermediate) is an active-site residue.

The protein belongs to the MnmA/TRMU family.

Its subcellular location is the cytoplasm. The catalysed reaction is S-sulfanyl-L-cysteinyl-[protein] + uridine(34) in tRNA + AH2 + ATP = 2-thiouridine(34) in tRNA + L-cysteinyl-[protein] + A + AMP + diphosphate + H(+). Catalyzes the 2-thiolation of uridine at the wobble position (U34) of tRNA, leading to the formation of s(2)U34. This Cereibacter sphaeroides (strain KD131 / KCTC 12085) (Rhodobacter sphaeroides) protein is tRNA-specific 2-thiouridylase MnmA.